The chain runs to 294 residues: UPF0761 membrane protein YPN_0254 (294 aa).

7 consecutive transmembrane segments (helical) span residues 44–64 (LLSL…FPMF), 67–87 (ISIK…GDII), 108–128 (GLIV…NIIW), 136–156 (LVFS…LVGA), 185–205 (VFPL…VPTV), 212–232 (ALIG…GFAM), and 246–266 (VLAV…IVLL).

It belongs to the UPF0761 family.

It is found in the cell inner membrane. In Yersinia pestis bv. Antiqua (strain Nepal516), this protein is UPF0761 membrane protein YPN_0254.